The following is a 158-amino-acid chain: Transcription elongation factor GreA (158 aa).

Positions 4–75 (QKQYPMTQEG…QRVENMLRNA (72 aa)) form a coiled coil.

Belongs to the GreA/GreB family.

Functionally, necessary for efficient RNA polymerase transcription elongation past template-encoded arresting sites. The arresting sites in DNA have the property of trapping a certain fraction of elongating RNA polymerases that pass through, resulting in locked ternary complexes. Cleavage of the nascent transcript by cleavage factors such as GreA or GreB allows the resumption of elongation from the new 3'terminus. GreA releases sequences of 2 to 3 nucleotides. The sequence is that of Transcription elongation factor GreA from Staphylococcus saprophyticus subsp. saprophyticus (strain ATCC 15305 / DSM 20229 / NCIMB 8711 / NCTC 7292 / S-41).